Here is a 317-residue protein sequence, read N- to C-terminus: L-lactate dehydrogenase (317 aa).

Residues Val17, Asp38, Lys43, Tyr69, and Gly83–Ala84 each bind NAD(+). Substrate-binding residues include Gln86 and Arg92. NAD(+)-binding positions include Ser105, Ala122–Asn124, and Ser147. Asn124–Asp127 is a binding site for substrate. Asp152–Arg155 provides a ligand contact to substrate. Beta-D-fructose 1,6-bisphosphate-binding residues include Arg157 and His172. Catalysis depends on His179, which acts as the Proton acceptor. Position 224 is a phosphotyrosine (Tyr224). Thr233 lines the substrate pocket.

The protein belongs to the LDH/MDH superfamily. LDH family. As to quaternary structure, homotetramer.

It is found in the cytoplasm. It catalyses the reaction (S)-lactate + NAD(+) = pyruvate + NADH + H(+). Its pathway is fermentation; pyruvate fermentation to lactate; (S)-lactate from pyruvate: step 1/1. Its activity is regulated as follows. Allosterically activated by fructose 1,6-bisphosphate (FBP). Catalyzes the conversion of lactate to pyruvate. This Geobacillus thermodenitrificans (strain NG80-2) protein is L-lactate dehydrogenase.